The chain runs to 216 residues: LHFPL tetraspan subfamily member 3 protein (216 aa).

4 helical membrane-spanning segments follow: residues 22-42 (IGVL…VCFV), 96-116 (FFIG…ALFF), 126-146 (ICGW…MIYP), and 177-197 (ILAI…FVLG).

This sequence belongs to the LHFP family.

The protein resides in the membrane. This Danio rerio (Zebrafish) protein is LHFPL tetraspan subfamily member 3 protein.